The following is a 279-amino-acid chain: Large ribosomal subunit protein uL2 (279 aa).

Residues 227 to 279 (GVAMNPVDHPMGGGEGKTSGGRHPVSPWGFPTKGKKTRDPNKLSSKFIKSKKR) are disordered.

This sequence belongs to the universal ribosomal protein uL2 family. Part of the 50S ribosomal subunit. Forms a bridge to the 30S subunit in the 70S ribosome.

In terms of biological role, one of the primary rRNA binding proteins. Required for association of the 30S and 50S subunits to form the 70S ribosome, for tRNA binding and peptide bond formation. It has been suggested to have peptidyltransferase activity; this is somewhat controversial. Makes several contacts with the 16S rRNA in the 70S ribosome. This chain is Large ribosomal subunit protein uL2, found in Neorickettsia sennetsu (strain ATCC VR-367 / Miyayama) (Ehrlichia sennetsu).